A 207-amino-acid chain; its full sequence is Serotonin N-acetyltransferase (207 aa).

At Thr31 the chain carries Phosphothreonine; by PKA. Residues 35-194 (SEFRCLTPQD…SLTFMELQCS (160 aa)) form the N-acetyltransferase domain. Leu124 serves as a coordination point for substrate. Acetyl-CoA contacts are provided by residues 124-126 (LAV) and 132-137 (QQGKGS). Residue Met159 coordinates substrate. Acetyl-CoA is bound at residue 168–170 (YEK). Residue Ser205 is modified to Phosphoserine.

The protein belongs to the acetyltransferase family. AANAT subfamily. In terms of assembly, monomer. Interacts with several 14-3-3 proteins, including YWHAB, YWHAE, YWHAG and YWHAZ, preferentially when phosphorylated at Thr-31. Phosphorylation on Ser-205 also allows binding to YWHAZ, but with lower affinity. The interaction with YWHAZ considerably increases affinity for arylalkylamines and acetyl-CoA and protects the enzyme from dephosphorylation and proteasomal degradation. It may also prevent thiol-dependent inactivation. CAMP-dependent phosphorylation on both N-terminal Thr-31 and C-terminal Ser-205 regulates AANAT activity by promoting interaction with 14-3-3 proteins. Highly expressed in pineal gland and retina. Also detected in heart and intestine.

The protein resides in the cytoplasm. The enzyme catalyses a 2-arylethylamine + acetyl-CoA = an N-acetyl-2-arylethylamine + CoA + H(+). It participates in aromatic compound metabolism; melatonin biosynthesis; melatonin from serotonin: step 1/2. Its function is as follows. Controls the night/day rhythm of melatonin production in the pineal gland. Catalyzes the N-acetylation of serotonin into N-acetylserotonin, the penultimate step in the synthesis of melatonin. This chain is Serotonin N-acetyltransferase (AANAT), found in Mesocricetus auratus (Golden hamster).